A 571-amino-acid chain; its full sequence is Fumarate reductase (cytochrome) (571 aa).

Residues histidine 8, cysteine 14, cysteine 17, histidine 18, cysteine 36, cysteine 39, histidine 40, histidine 52, histidine 58, histidine 61, cysteine 68, cysteine 71, histidine 72, alanine 74, histidine 75, cysteine 82, cysteine 85, histidine 86, asparagine 91, and tyrosine 94 each contribute to the heme c site. The interval 118–571 is flavoprotein-like; that stretch reads ALASAPHDTV…EEAAKYSKKN (454 aa). Residues alanine 137, glutamate 156, asparagine 164, alanine 165, alanine 169, glycine 170, glycine 171, glycine 278, and glutamine 338 each contribute to the FAD site. Residue glycine 170 coordinates succinate. The succinate site is built by histidine 365, threonine 377, and glutamate 378. Fumarate is bound by residues threonine 377, glutamate 378, and arginine 402. Arginine 402 acts as the Proton donor in catalysis. Lysine 431 lines the heme c pocket. Residue histidine 504 coordinates succinate. Histidine 504 is a fumarate binding site. The FAD site is built by histidine 505 and glutamate 534. Succinate is bound by residues arginine 544 and glycine 547. Fumarate contacts are provided by arginine 544 and glycine 547. Positions 549 and 550 each coordinate FAD.

In terms of assembly, monomer. FAD is required as a cofactor. The cofactor is heme c.

It is found in the periplasm. It catalyses the reaction 2 Fe(III)-[cytochrome c] + succinate = fumarate + 2 Fe(II)-[cytochrome c] + 2 H(+). Flavocytochrome that catalyzes the reduction of fumarate to succinate. Is essential for fumarate respiration during anaerobic growth, acting as the terminal reductase. Receives electrons from the membrane-bound tetraheme c-type cytochrome CymA. In vitro, can use the artificial electron donor methyl viologen. This Shewanella frigidimarina protein is Fumarate reductase (cytochrome) (fccA).